Consider the following 759-residue polypeptide: Phosphoribosylformylglycinamidine synthase subunit PurL (759 aa).

Residue histidine 61 is part of the active site. Residues tyrosine 64 and lysine 105 each coordinate ATP. Position 107 (glutamate 107) interacts with Mg(2+). Residues 108–111 (SHNH) and arginine 130 each bind substrate. Catalysis depends on histidine 109, which acts as the Proton acceptor. Aspartate 131 is a Mg(2+) binding site. Residue glutamine 260 coordinates substrate. Aspartate 288 is a binding site for Mg(2+). Position 332–334 (332–334 (ESQ)) interacts with substrate. 2 residues coordinate ATP: aspartate 520 and glycine 557. Asparagine 558 contributes to the Mg(2+) binding site. Serine 560 contributes to the substrate binding site.

It belongs to the FGAMS family. As to quaternary structure, monomer. Part of the FGAM synthase complex composed of 1 PurL, 1 PurQ and 2 PurS subunits.

It is found in the cytoplasm. The catalysed reaction is N(2)-formyl-N(1)-(5-phospho-beta-D-ribosyl)glycinamide + L-glutamine + ATP + H2O = 2-formamido-N(1)-(5-O-phospho-beta-D-ribosyl)acetamidine + L-glutamate + ADP + phosphate + H(+). It functions in the pathway purine metabolism; IMP biosynthesis via de novo pathway; 5-amino-1-(5-phospho-D-ribosyl)imidazole from N(2)-formyl-N(1)-(5-phospho-D-ribosyl)glycinamide: step 1/2. Part of the phosphoribosylformylglycinamidine synthase complex involved in the purines biosynthetic pathway. Catalyzes the ATP-dependent conversion of formylglycinamide ribonucleotide (FGAR) and glutamine to yield formylglycinamidine ribonucleotide (FGAM) and glutamate. The FGAM synthase complex is composed of three subunits. PurQ produces an ammonia molecule by converting glutamine to glutamate. PurL transfers the ammonia molecule to FGAR to form FGAM in an ATP-dependent manner. PurS interacts with PurQ and PurL and is thought to assist in the transfer of the ammonia molecule from PurQ to PurL. The protein is Phosphoribosylformylglycinamidine synthase subunit PurL of Thermoplasma acidophilum (strain ATCC 25905 / DSM 1728 / JCM 9062 / NBRC 15155 / AMRC-C165).